A 543-amino-acid chain; its full sequence is Putative pectinesterase/pectinesterase inhibitor 22 (543 aa).

An N-terminal signal peptide occupies residues 1 to 19; sequence MGITTALLLVMLMSVHTSS. The tract at residues 38-197 is pectinesterase inhibitor 22; it reads AKACQFIDAH…TQLVSNVLDM (160 aa). N-linked (GlcNAc...) asparagine glycans are attached at residues Asn211 and Asn263. Positions 240–527 are pectinesterase 22; it reads NTVVAIDGKG…FTVGSFIDGR (288 aa). Residues Thr315 and Gln345 each coordinate substrate. Residue Asp368 is the Proton donor; for pectinesterase activity of the active site. A disulfide bridge links Cys382 with Cys402. Catalysis depends on Asp389, which acts as the Nucleophile; for pectinesterase activity. Substrate contacts are provided by Arg448 and Trp450.

It in the N-terminal section; belongs to the PMEI family. In the C-terminal section; belongs to the pectinesterase family.

It localises to the secreted. It is found in the cell wall. The catalysed reaction is [(1-&gt;4)-alpha-D-galacturonosyl methyl ester](n) + n H2O = [(1-&gt;4)-alpha-D-galacturonosyl](n) + n methanol + n H(+). It participates in glycan metabolism; pectin degradation; 2-dehydro-3-deoxy-D-gluconate from pectin: step 1/5. Functionally, acts in the modification of cell walls via demethylesterification of cell wall pectin. The polypeptide is Putative pectinesterase/pectinesterase inhibitor 22 (PME22) (Arabidopsis thaliana (Mouse-ear cress)).